The primary structure comprises 224 residues: Metalloproteinase inhibitor 4 (224 aa).

An N-terminal signal peptide occupies residues 1 to 29 (MPQSPRPVPSWALLLRLLALLRPPGLGEA). Position 30 (Cys-30) interacts with Zn(2+). Involved in metalloproteinase-binding regions lie at residues 30-33 (CSCA) and 99-100 (SS). Cystine bridges form between Cys-30–Cys-102, Cys-32–Cys-131, Cys-42–Cys-156, Cys-158–Cys-205, Cys-163–Cys-168, and Cys-176–Cys-197. The 127-residue stretch at 30-156 (CSCAPAHPQQ…SLNHHYHLNC (127 aa)) folds into the NTR domain.

Belongs to the protease inhibitor I35 (TIMP) family.

The protein resides in the secreted. Functionally, complexes with metalloproteinases (such as collagenases) and irreversibly inactivates them by binding to their catalytic zinc cofactor. This is Metalloproteinase inhibitor 4 (TIMP4) from Bos taurus (Bovine).